A 245-amino-acid polypeptide reads, in one-letter code: Transcriptional activator protein ExpR (245 aa).

An HTH luxR-type domain is found at 173–238 (RSNDKDIFSQ…HAIRLGIELQ (66 aa)). The segment at residues 197–216 (YQEIALILDIKTGTVKFHIG) is a DNA-binding region (H-T-H motif).

The protein belongs to the autoinducer-regulated transcriptional regulatory protein family.

Functions as an OHLL responsive transcriptional regulator that acts in virulence (soft rot disease) through the activation of genes for plant tissue macerating enzymes. This chain is Transcriptional activator protein ExpR (expR), found in Pectobacterium parmentieri.